Here is a 130-residue protein sequence, read N- to C-terminus: UPF0251 protein MmarC6_0272 (130 aa).

It belongs to the UPF0251 family.

The polypeptide is UPF0251 protein MmarC6_0272 (Methanococcus maripaludis (strain C6 / ATCC BAA-1332)).